The primary structure comprises 269 residues: 1,6-dihydroxycyclohexa-2,4-diene-1-carboxylate dehydrogenase (269 aa).

NAD(+) is bound at residue 11–35 (VITGAAQGIGRRVAERMAAEGGRLL). Residue Ser-142 participates in substrate binding. The active-site Proton acceptor is the Tyr-153.

Belongs to the short-chain dehydrogenases/reductases (SDR) family. As to quaternary structure, homodimer.

The catalysed reaction is (1R,6S)-1,6-dihydroxycyclohexa-2,4-diene-1-carboxylate + NAD(+) = catechol + CO2 + NADH. It functions in the pathway aromatic compound metabolism; benzoate degradation via hydroxylation; catechol from benzoate: step 2/2. Degradation of 2-hydro-1,2-dihydroxy benzoate (DHB) to catechol. In Pseudomonas putida (Arthrobacter siderocapsulatus), this protein is 1,6-dihydroxycyclohexa-2,4-diene-1-carboxylate dehydrogenase (xylL).